A 342-amino-acid polypeptide reads, in one-letter code: tRNA-specific 2-thiouridylase MnmA (342 aa).

ATP-binding positions include 6–13 and Leu32; that span reads LLSGGVDS. Cys92 functions as the Nucleophile in the catalytic mechanism. A disulfide bridge links Cys92 with Cys191. Gly116 is a binding site for ATP. The segment at 138–140 is interaction with tRNA; that stretch reads KDQ. The Cysteine persulfide intermediate role is filled by Cys191. Residues 293–294 are interaction with tRNA; the sequence is RY.

Belongs to the MnmA/TRMU family.

The protein resides in the cytoplasm. It catalyses the reaction S-sulfanyl-L-cysteinyl-[protein] + uridine(34) in tRNA + AH2 + ATP = 2-thiouridine(34) in tRNA + L-cysteinyl-[protein] + A + AMP + diphosphate + H(+). Catalyzes the 2-thiolation of uridine at the wobble position (U34) of tRNA, leading to the formation of s(2)U34. This is tRNA-specific 2-thiouridylase MnmA from Helicobacter acinonychis (strain Sheeba).